The following is a 253-amino-acid chain: Trypsin delta (253 aa).

The signal sequence occupies residues 1–22 (MLKFVILLSAVACALGGTIPEG). A propeptide spans 23-30 (LLPQLDGR) (activation peptide). One can recognise a Peptidase S1 domain in the interval 31–253 (IVGGTATTIS…DLRAWVVRNA (223 aa)). Cysteines 56 and 72 form a disulfide. Catalysis depends on charge relay system residues His-71 and Asp-116. Cystine bridges form between Cys-180-Cys-197 and Cys-206-Cys-230. Ser-210 acts as the Charge relay system in catalysis.

It belongs to the peptidase S1 family.

It localises to the secreted. Its subcellular location is the extracellular space. It carries out the reaction Preferential cleavage: Arg-|-Xaa, Lys-|-Xaa.. The chain is Trypsin delta from Drosophila erecta (Fruit fly).